A 501-amino-acid polypeptide reads, in one-letter code: Dipeptide and tripeptide permease A (501 aa).

Topologically, residues 1-34 (MSTANNNQPESISMNAFKQPKAFYLIFSIELWER) are cytoplasmic. Residues 35–55 (FGYYGLQGIMAVYLVKMLGMS) form a helical membrane-spanning segment. At 56 to 59 (EADS) the chain is on the periplasmic side. The helical transmembrane segment at 60–80 (ITLFSSFSALVYGFVAIGGWL) threads the bilayer. The Cytoplasmic segment spans residues 81-89 (GDKVLGAKR). 2 consecutive transmembrane segments (helical) span residues 90–110 (VIVL…YSGH) and 111–131 (EIFW…LFKA). Over 132–153 (NPSSLLSTCYSKDDPRLDGAFT) the chain is Periplasmic. A helical transmembrane segment spans residues 154-174 (MYYMSINIGSFFSMLATPWLA). At 175–178 (AKYG) the chain is on the cytoplasmic side. The chain crosses the membrane as a helical span at residues 179 to 199 (WSVAFSLSVVGMLITLVNFWF). The Periplasmic segment spans residues 200–220 (CRKWVKNQGSKPDFLPLQFKK). Residues 221-241 (LLMVLVGIIALITLSNWLLHN) traverse the membrane as a helical segment. The Cytoplasmic segment spans residues 242 to 246 (QIIAR). The helical transmembrane segment at 247–267 (WALALVSLGIIFIFTKETLFL) threads the bilayer. Topologically, residues 268 to 274 (QGIARRR) are periplasmic. The helical transmembrane segment at 275–295 (MIVAFLLMLEAVIFFVLYSQM) threads the bilayer. Residues 296–320 (PTSLNFFAIHNVEHSIFGIGFEPEQ) are Cytoplasmic-facing. Residues 321-341 (FQALNPFWIMLASPILAAIYN) form a helical membrane-spanning segment. Over 342 to 352 (KMGDRLPMPHK) the chain is Periplasmic. A helical membrane pass occupies residues 353 to 373 (FAFGMMLCSAAFLVLPWGASF). Topologically, residues 374 to 383 (ANEHGIVSVN) are cytoplasmic. Residues 384–404 (WLILSYALQSIGELMISGLGL) traverse the membrane as a helical segment. Residues 405-414 (AMVAQLVPQR) lie on the Periplasmic side of the membrane. Residues 415 to 435 (LMGFIMGSWFLTTAAAALIAG) form a helical membrane-spanning segment. Residues 436-460 (KVAALTAVPSDAITDAHASLAIYSH) lie on the Cytoplasmic side of the membrane. A helical transmembrane segment spans residues 461–481 (VFMQIGIVTAIIAVLMMLTAP). Over 482–501 (KLYRMTLAPSDHNDVKIMTQ) the chain is Periplasmic.

The protein belongs to the major facilitator superfamily. Proton-dependent oligopeptide transporter (POT/PTR) (TC 2.A.17) family. DtpA subfamily.

The protein resides in the cell inner membrane. Proton-dependent permease that transports di- and tripeptides. This is Dipeptide and tripeptide permease A from Yersinia pestis.